Here is a 256-residue protein sequence, read N- to C-terminus: Triosephosphate isomerase (256 aa).

9 to 11 provides a ligand contact to substrate; that stretch reads NWK. H97 (electrophile) is an active-site residue. Catalysis depends on E169, which acts as the Proton acceptor. Substrate contacts are provided by residues G175, S214, and 235–236; that span reads GG.

The protein belongs to the triosephosphate isomerase family. As to quaternary structure, homodimer.

The protein localises to the cytoplasm. The catalysed reaction is D-glyceraldehyde 3-phosphate = dihydroxyacetone phosphate. It functions in the pathway carbohydrate biosynthesis; gluconeogenesis. The protein operates within carbohydrate degradation; glycolysis; D-glyceraldehyde 3-phosphate from glycerone phosphate: step 1/1. Its function is as follows. Involved in the gluconeogenesis. Catalyzes stereospecifically the conversion of dihydroxyacetone phosphate (DHAP) to D-glyceraldehyde-3-phosphate (G3P). The chain is Triosephosphate isomerase from Moritella marina (Vibrio marinus).